The sequence spans 549 residues: Cytochrome c oxidase subunit 1 homolog, bacteroid (549 aa).

3 helical membrane passes run 12–32 (IGES…VIAA), 39–59 (PFAF…FCIV), and 87–107 (FSSF…LIIA). His131 serves as a coordination point for heme b. Helical transmembrane passes span 132-152 (TSAV…FYVV), 168-188 (FVVV…LLGV), 201-221 (ADLW…ATII), 228-248 (IFVA…LHLG), 279-299 (GHNA…YYFI), 312-332 (LSII…PHHL), 344-364 (LGMT…INGL), and 382-402 (MLVV…MMSI). Residues His280, His330, and His331 each coordinate Cu cation. His418 and His420 together coordinate heme b. 3 consecutive transmembrane segments (helical) span residues 423-443 (ALGW…PWAW), 458-478 (FWVA…SGIL), and 512-532 (AGGG…WMTV).

It belongs to the heme-copper respiratory oxidase family. Requires Cu(2+) as cofactor. Heme b serves as cofactor.

The protein resides in the cell membrane. It catalyses the reaction 4 Fe(II)-[cytochrome c] + O2 + 8 H(+)(in) = 4 Fe(III)-[cytochrome c] + 2 H2O + 4 H(+)(out). Its pathway is energy metabolism; oxidative phosphorylation. Functionally, cytochrome c oxidase is the component of the respiratory chain that catalyzes the reduction of oxygen to water. Subunits 1-3 form the functional core of the enzyme complex. Co I is the catalytic subunit of the enzyme. Electrons originating in cytochrome c or a quinol are transferred to the bimetallic center formed by a high-spin heme and copper B. The chain is Cytochrome c oxidase subunit 1 homolog, bacteroid (fixN) from Bradyrhizobium diazoefficiens (strain JCM 10833 / BCRC 13528 / IAM 13628 / NBRC 14792 / USDA 110).